Here is a 200-residue protein sequence, read N- to C-terminus: Endoribonuclease YbeY (200 aa).

Zn(2+) contacts are provided by His120, His124, and His130.

It belongs to the endoribonuclease YbeY family. It depends on Zn(2+) as a cofactor.

The protein resides in the cytoplasm. Its function is as follows. Single strand-specific metallo-endoribonuclease involved in late-stage 70S ribosome quality control and in maturation of the 3' terminus of the 16S rRNA. The sequence is that of Endoribonuclease YbeY from Corynebacterium efficiens (strain DSM 44549 / YS-314 / AJ 12310 / JCM 11189 / NBRC 100395).